The primary structure comprises 226 residues: Lipid phosphate phosphatase gamma (226 aa).

The residue at position 1 (Met-1) is an N-acetylmethionine. The next 5 membrane-spanning stretches (helical) occupy residues 24-44 (LGHFLAWISLVPVFISLGGFV), 52-72 (ELQGIFFGIGLVISQFINEFI), 102-122 (FMFFFATYFSLMGCKGIGFWF), 128-148 (WIMNLLHWSLAVVTMYSRVYL), and 152-174 (TVAQVFAGAALGGIVGASWFWVV).

This sequence belongs to the PA-phosphatase related phosphoesterase family. Expressed in root tips, root branch points, vascular tissue of cotyledons and leaves, pistil, anthers and filaments.

It localises to the plastid. It is found in the chloroplast inner membrane. Its activity is regulated as follows. Inhibited by Mg(2+). Its function is as follows. Exhibits phosphatidate phosphatase (PAP) activity in vitro. May play a primary role as PAP in plastids. This Arabidopsis thaliana (Mouse-ear cress) protein is Lipid phosphate phosphatase gamma (LPPG).